The following is a 54-amino-acid chain: Large ribosomal subunit protein bL32c (54 aa).

A disordered region spans residues 1-20; sequence MAVPKKKMSKSRRNSRKSNW.

It belongs to the bacterial ribosomal protein bL32 family.

The protein resides in the plastid. It localises to the chloroplast. This is Large ribosomal subunit protein bL32c (rpl32) from Euglena gracilis.